A 359-amino-acid polypeptide reads, in one-letter code: GTP 3',8-cyclase (359 aa).

Residues 33-260 (RFGRRHDSLR…PTGRENPSAP (228 aa)) enclose the Radical SAM core domain. Arginine 42 contacts GTP. [4Fe-4S] cluster contacts are provided by cysteine 49 and cysteine 53. Tyrosine 55 contacts S-adenosyl-L-methionine. Position 56 (cysteine 56) interacts with [4Fe-4S] cluster. A GTP-binding site is contributed by arginine 93. Glycine 97 serves as a coordination point for S-adenosyl-L-methionine. Threonine 124 contacts GTP. Serine 148 contributes to the S-adenosyl-L-methionine binding site. GTP is bound at residue lysine 185. Methionine 219 is an S-adenosyl-L-methionine binding site. The [4Fe-4S] cluster site is built by cysteine 286 and cysteine 289. Residue 291–293 (RLR) participates in GTP binding. Cysteine 303 contributes to the [4Fe-4S] cluster binding site.

This sequence belongs to the radical SAM superfamily. MoaA family. Monomer and homodimer. Requires [4Fe-4S] cluster as cofactor.

It carries out the reaction GTP + AH2 + S-adenosyl-L-methionine = (8S)-3',8-cyclo-7,8-dihydroguanosine 5'-triphosphate + 5'-deoxyadenosine + L-methionine + A + H(+). Its pathway is cofactor biosynthesis; molybdopterin biosynthesis. In terms of biological role, catalyzes the cyclization of GTP to (8S)-3',8-cyclo-7,8-dihydroguanosine 5'-triphosphate. The protein is GTP 3',8-cyclase of Rhodopirellula baltica (strain DSM 10527 / NCIMB 13988 / SH1).